Reading from the N-terminus, the 305-residue chain is UDP-3-O-acyl-N-acetylglucosamine deacetylase (305 aa).

Residues H79, H238, and D242 each coordinate Zn(2+). H265 serves as the catalytic Proton donor.

It belongs to the LpxC family. Requires Zn(2+) as cofactor.

The enzyme catalyses a UDP-3-O-[(3R)-3-hydroxyacyl]-N-acetyl-alpha-D-glucosamine + H2O = a UDP-3-O-[(3R)-3-hydroxyacyl]-alpha-D-glucosamine + acetate. It participates in glycolipid biosynthesis; lipid IV(A) biosynthesis; lipid IV(A) from (3R)-3-hydroxytetradecanoyl-[acyl-carrier-protein] and UDP-N-acetyl-alpha-D-glucosamine: step 2/6. In terms of biological role, catalyzes the hydrolysis of UDP-3-O-myristoyl-N-acetylglucosamine to form UDP-3-O-myristoylglucosamine and acetate, the committed step in lipid A biosynthesis. This chain is UDP-3-O-acyl-N-acetylglucosamine deacetylase, found in Escherichia coli O45:K1 (strain S88 / ExPEC).